The primary structure comprises 97 residues: UPF0416 protein RC0826 (97 aa).

An N-terminal signal peptide occupies residues 1–33 (MRIFVKAAISTAAWRFYAHPTVAMGICVGTALA).

Belongs to the UPF0416 family.

This chain is UPF0416 protein RC0826, found in Rickettsia conorii (strain ATCC VR-613 / Malish 7).